Reading from the N-terminus, the 393-residue chain is NAD(P)H-quinone oxidoreductase subunit H, chloroplastic (393 aa).

Belongs to the complex I 49 kDa subunit family. In terms of assembly, NDH is composed of at least 16 different subunits, 5 of which are encoded in the nucleus.

It localises to the plastid. The protein resides in the chloroplast thylakoid membrane. The catalysed reaction is a plastoquinone + NADH + (n+1) H(+)(in) = a plastoquinol + NAD(+) + n H(+)(out). The enzyme catalyses a plastoquinone + NADPH + (n+1) H(+)(in) = a plastoquinol + NADP(+) + n H(+)(out). Functionally, NDH shuttles electrons from NAD(P)H:plastoquinone, via FMN and iron-sulfur (Fe-S) centers, to quinones in the photosynthetic chain and possibly in a chloroplast respiratory chain. The immediate electron acceptor for the enzyme in this species is believed to be plastoquinone. Couples the redox reaction to proton translocation, and thus conserves the redox energy in a proton gradient. The protein is NAD(P)H-quinone oxidoreductase subunit H, chloroplastic of Arabis hirsuta (Hairy rock-cress).